A 343-amino-acid polypeptide reads, in one-letter code: tRNA N6-adenosine threonylcarbamoyltransferase (343 aa).

The Fe cation site is built by His111 and His115. Residues 135 to 139 (VLSGG), Asp168, Gly181, and Asn280 each bind substrate. Residue Asp306 participates in Fe cation binding.

Belongs to the KAE1 / TsaD family. Fe(2+) is required as a cofactor.

The protein resides in the cytoplasm. It carries out the reaction L-threonylcarbamoyladenylate + adenosine(37) in tRNA = N(6)-L-threonylcarbamoyladenosine(37) in tRNA + AMP + H(+). Its function is as follows. Required for the formation of a threonylcarbamoyl group on adenosine at position 37 (t(6)A37) in tRNAs that read codons beginning with adenine. Is involved in the transfer of the threonylcarbamoyl moiety of threonylcarbamoyl-AMP (TC-AMP) to the N6 group of A37, together with TsaE and TsaB. TsaD likely plays a direct catalytic role in this reaction. The polypeptide is tRNA N6-adenosine threonylcarbamoyltransferase (Protochlamydia amoebophila (strain UWE25)).